A 502-amino-acid polypeptide reads, in one-letter code: Cytochrome P450 monooxygenase AacuE (502 aa).

A helical membrane pass occupies residues 4–26; that stretch reads AITGLVATVTTFLAYIVFLSYTP. N-linked (GlcNAc...) asparagine glycosylation occurs at Asn-393. Cys-439 is a heme binding site.

The protein belongs to the cytochrome P450 family. Requires heme as cofactor.

It is found in the membrane. Its pathway is secondary metabolite biosynthesis. Functionally, cytochrome P450 monooxygenase; part of the gene cluster that mediates the biosynthesis of the tetrahydroxanthone dimer secalonic acid D. The pathway begins with the synthesis of atrochrysone thioester by the polyketide synthase AacuL. The atrochrysone carboxyl ACP thioesterase AacuM then breaks the thioester bond and releases the atrochrysone carboxylic acid from AacuL. Atrochrysone carboxylic acid is decarboxylated by the decarboxylase AacuI, and oxidized by the anthrone oxygenase AacuG to yield emodin. Emodin is then reduced to emodin hydroquinone by a yet unidentified oxidoreductase. A-ring reduction by the short chain dehydrogenase AacuN, dehydration by the scytalone dehydratase-like protein AacuK and probable spontaneous re-oxidation, results in overall deoxygenation to chrysophanol. Baeyer-Villiger oxidation by the Baeyer-Villiger monooxygenase (BVMO) AacuH then yields monodictyphenone. Monodictyphenone is transformed into compounds with the tetrahydroxanthone skeleton via methylesterification by the methyltransferase AacuQ, followed by the action of the flavin-dependent monooxygenase AacuC, the isomerase AacuP, and the short chain dehydrogenase/reductase AacuF or AacuD. AacuF and AacuD should accept the same compound as a substrate but perform the ketoreduction with a different stereoselectivity, thus yielding blennolides B and A, respectively. In the final step of the biosynthesis, the cytochrome P450 monooxygenase AacuE accepts blennolide B and/or blennolide A to conduct the dimerization reaction to furnish the tetrahydroxanthone dimers, secalonic acids D, B, and F. This Aspergillus aculeatus (strain ATCC 16872 / CBS 172.66 / WB 5094) protein is Cytochrome P450 monooxygenase AacuE.